The chain runs to 427 residues: Isocitrate dehydrogenase [NADP] (427 aa).

T114 is a binding site for NADP(+). 5 residues coordinate D-threo-isocitrate: S123, N125, R129, R139, and R163. Residue D317 participates in Mg(2+) binding. Residues 349–355 (HGTAPKY), N362, Y401, and R405 contribute to the NADP(+) site.

The protein belongs to the isocitrate and isopropylmalate dehydrogenases family. Homodimer. Mg(2+) serves as cofactor. It depends on Mn(2+) as a cofactor.

The catalysed reaction is D-threo-isocitrate + NADP(+) = 2-oxoglutarate + CO2 + NADPH. Its function is as follows. Catalyzes the oxidative decarboxylation of isocitrate to 2-oxoglutarate and carbon dioxide with the concomitant reduction of NADP(+). This Coxiella burnetii (strain RSA 493 / Nine Mile phase I) protein is Isocitrate dehydrogenase [NADP] (icd).